Reading from the N-terminus, the 821-residue chain is MFERFTEKAIKVIMLAQEEARRLGHNFVGTEQILLGLVGEGTGIAAQVLKSMNVNLKDARVEVEKIIGRGSGFVAVEIPFTPRAKRVLELSLEEARQLGHNYIGTEHLLMGLVREGEGVAARVLENLAVDVSSIRAEVIQMLGENAEANVSGSNTTQARSKTPTLEEFGSNLTQMAMEGGLDPVVGRQKEIERVIQILGRRTKNNPVLIGEPGVGKTAIAEGLAQRIANRDVPSILEDKLVITLDVGLLVAGTKYRGEFEERLKRIMDEIKSADNVILVIDEVHTLIGAGAAEGAIDAANLLKPALARGELQCIGATTLEEYRKHIEKDPALERRFQPVVVGEPSVEETIEILFGLRDRYEKHHQLTMSDGALAAAAKYANQYISDRFLPDKAIDLIDEAGSRVRLLNSQLPPAARELDKELRAVLKTKDEAIRAQKYETAEQYRAREMEIKAQIAAIAQSKKNEPDLNLEDPVVTEDDIAEIVAAWTGIPVTKLTKSESEKLMHMEETLHGRIIGQDEAVVAVSRAIRRARVGLKNPNRPIASFIFSGPTGVGKTELTKALASYFFGSEASMIRLDMSEYMERHTVSKLIGSPPGYVGYSEGGYLTEAVRKKPYTVILFDEIEKAHPDIFNLLLQILEDGRLTDAKGRTIDFKNTLLIMTSNIGSKVIEKGGGSLGFELSEDQTESQYTRVRSLVNEELKQYFRPEFLNRLDEIIVFRQLTKDEVREIAELMLNEVFARIKQQDIQLNVTERFKQRLVEEGYNPSYGARPLRRAVMRLLEDSLAEEVLSGKIKAGDSAVVDVTNEGEVTVLLGEKLELLT.

The Clp R domain occupies 2–144; that stretch reads FERFTEKAIK…RAEVIQMLGE (143 aa). Repeat stretches follow at residues 5–70 and 80–144; these read FTEK…IGRG and FTPR…MLGE. ATP contacts are provided by residues 210–217 and 549–556; these read GEPGVGKT and GPTGVGKT.

The protein belongs to the ClpA/ClpB family.

The protein resides in the plastid. It localises to the chloroplast. In terms of biological role, may interact with a ClpP-like protease involved in degradation of denatured proteins in the chloroplast. In Pyropia yezoensis (Susabi-nori), this protein is ATP-dependent Clp protease ATP-binding subunit ClpA homolog (clpC).